The primary structure comprises 555 residues: CTP synthase (555 aa).

The segment at 1–265 (MTRYIFITGG…GNRVCEKLNI (265 aa)) is amidoligase domain. Ser-13 contributes to the CTP binding site. UTP is bound at residue Ser-13. Residues 14-19 (SLGKGI) and Asp-71 each bind ATP. The Mg(2+) site is built by Asp-71 and Glu-139. Residues 146-148 (DIE), 186-191 (KTKPTQ), and Lys-222 contribute to the CTP site. UTP is bound by residues 186–191 (KTKPTQ) and Lys-222. A Glutamine amidotransferase type-1 domain is found at 290 to 541 (TVAVVGKYVD…IKAGLAAKEA (252 aa)). Residue Gly-351 participates in L-glutamine binding. The Nucleophile; for glutamine hydrolysis role is filled by Cys-378. Residues 379-382 (LGMQ), Glu-402, and Arg-469 contribute to the L-glutamine site. Catalysis depends on residues His-514 and Glu-516.

It belongs to the CTP synthase family. As to quaternary structure, homotetramer.

The catalysed reaction is UTP + L-glutamine + ATP + H2O = CTP + L-glutamate + ADP + phosphate + 2 H(+). It catalyses the reaction L-glutamine + H2O = L-glutamate + NH4(+). It carries out the reaction UTP + NH4(+) + ATP = CTP + ADP + phosphate + 2 H(+). It participates in pyrimidine metabolism; CTP biosynthesis via de novo pathway; CTP from UDP: step 2/2. Its activity is regulated as follows. Allosterically activated by GTP, when glutamine is the substrate; GTP has no effect on the reaction when ammonia is the substrate. The allosteric effector GTP functions by stabilizing the protein conformation that binds the tetrahedral intermediate(s) formed during glutamine hydrolysis. Inhibited by the product CTP, via allosteric rather than competitive inhibition. Catalyzes the ATP-dependent amination of UTP to CTP with either L-glutamine or ammonia as the source of nitrogen. Regulates intracellular CTP levels through interactions with the four ribonucleotide triphosphates. This Coxiella burnetii (strain RSA 493 / Nine Mile phase I) protein is CTP synthase.